The sequence spans 813 residues: Ribonuclease R (813 aa).

The RNB domain occupies 260-587 (RVDLRDLPLV…LHRAIKYLLA (328 aa)). Lys544 carries the N6-acetyllysine modification. Residues 644 to 725 (GNVFKGVISS…DERKIDFSLI (82 aa)) form the S1 motif domain. Residues 733–813 (NVGKTAREKA…KRAAKKKVAE (81 aa)) form a disordered region. Composition is skewed to basic and acidic residues over residues 737–749 (TARE…DAGK) and 761–774 (VNFE…GEKK). Basic residues predominate over residues 775 to 791 (TKPKAAKKDARKAKKPS). The span at 792–801 (AKTQKIAAAT) shows a compositional bias: low complexity. The span at 802-813 (KAKRAAKKKVAE) shows a compositional bias: basic residues.

Belongs to the RNR ribonuclease family. RNase R subfamily. As to quaternary structure, monomer.

Its subcellular location is the cytoplasm. It carries out the reaction Exonucleolytic cleavage in the 3'- to 5'-direction to yield nucleoside 5'-phosphates.. Its function is as follows. 3'-5' exoribonuclease that releases 5'-nucleoside monophosphates and is involved in maturation of structured RNAs. Required for the expression of virulence genes on the large plasmid of S.flexneri at the post-transcriptional level. This Shigella flexneri protein is Ribonuclease R.